Here is a 242-residue protein sequence, read N- to C-terminus: Peroxisomal membrane protein 11-3 (242 aa).

The interval 1-22 (MAAAAAAAGSSDSRKPAAHPPP) is disordered. The Cytoplasmic segment spans residues 1 to 102 (MAAAAAAAGS…LRAHPHPPPA (102 aa)). Residues 103–123 (VALLAYGGEGVYYFLEQFVWL) form a helical membrane-spanning segment. Topologically, residues 124–214 (AKAGLLPAHL…MALGDVTDGK (91 aa)) are lumenal. The helical transmembrane segment at 215 to 235 (GLLGSSTLMASAGLLSALISA) threads the bilayer. Topologically, residues 236-242 (HKNWNSC) are cytoplasmic.

It belongs to the peroxin-11 family. As to expression, expressed in seedlings, roots, leaf sheaths, spikelets and endosperm.

It is found in the peroxisome membrane. Its function is as follows. Involved in peroxisomal proliferation. The chain is Peroxisomal membrane protein 11-3 (PEX11-3) from Oryza sativa subsp. japonica (Rice).